Consider the following 83-residue polypeptide: Exodeoxyribonuclease 7 small subunit (83 aa).

Belongs to the XseB family. Heterooligomer composed of large and small subunits.

The protein localises to the cytoplasm. The catalysed reaction is Exonucleolytic cleavage in either 5'- to 3'- or 3'- to 5'-direction to yield nucleoside 5'-phosphates.. Its function is as follows. Bidirectionally degrades single-stranded DNA into large acid-insoluble oligonucleotides, which are then degraded further into small acid-soluble oligonucleotides. This Rhizobium meliloti (strain 1021) (Ensifer meliloti) protein is Exodeoxyribonuclease 7 small subunit.